Here is a 175-residue protein sequence, read N- to C-terminus: Small ribosomal subunit protein uS5 (175 aa).

The region spanning 11-74 (LSEVLVDVNR…QAAKKRMMKV (64 aa)) is the S5 DRBM domain.

Belongs to the universal ribosomal protein uS5 family. In terms of assembly, part of the 30S ribosomal subunit. Contacts proteins S4 and S8.

Its function is as follows. With S4 and S12 plays an important role in translational accuracy. Located at the back of the 30S subunit body where it stabilizes the conformation of the head with respect to the body. This is Small ribosomal subunit protein uS5 from Rickettsia typhi (strain ATCC VR-144 / Wilmington).